A 210-amino-acid chain; its full sequence is Cytochrome c biogenesis ATP-binding export protein CcmA (210 aa).

Residues 3–205 form the ABC transporter domain; that stretch reads LHLQAAGLAC…KPSGYRELNL (203 aa). ATP is bound at residue 37 to 44; the sequence is GPNGSGKT.

Belongs to the ABC transporter superfamily. CcmA exporter (TC 3.A.1.107) family. The complex is composed of two ATP-binding proteins (CcmA) and two transmembrane proteins (CcmB).

The protein localises to the cell inner membrane. The enzyme catalyses heme b(in) + ATP + H2O = heme b(out) + ADP + phosphate + H(+). In terms of biological role, part of the ABC transporter complex CcmAB involved in the biogenesis of c-type cytochromes; once thought to export heme, this seems not to be the case, but its exact role is uncertain. Responsible for energy coupling to the transport system. The polypeptide is Cytochrome c biogenesis ATP-binding export protein CcmA (Pseudomonas putida (strain ATCC 47054 / DSM 6125 / CFBP 8728 / NCIMB 11950 / KT2440)).